The chain runs to 434 residues: DENN domain-containing protein 11 (434 aa).

The tract at residues 1–29 (MARRTDRAPLLDWAEGPGVSPAPETEQGE) is disordered. Residues 1–168 (MARRTDRAPL…QLEIPGHYTP (168 aa)) enclose the uDENN domain. Residues 194–341 (LPPVHKHLYP…VNSADKEKYQ (148 aa)) enclose the cDENN domain. The dDENN domain maps to 343-434 (LNDQRQLLMY…MLVIDNPCCP (92 aa)).

The protein belongs to the DENND11 family.

Its function is as follows. Probable guanine nucleotide exchange factor (GEF). May promote the exchange of GDP to GTP, converting inactive GDP-bound small GTPases into their active GTP-bound form. This chain is DENN domain-containing protein 11 (dennd11), found in Xenopus laevis (African clawed frog).